The primary structure comprises 1671 residues: Fatty acid synthase alpha subunit aflA (1671 aa).

The segment at 40–60 (ITEEAPTEQPPLSTPPSLPQT) is disordered. A compositionally biased stretch (pro residues) spans 47 to 58 (EQPPLSTPPSLP). The Carrier domain occupies 75–153 (DVALSRVQIV…DANPTVQLGK (79 aa)). An O-(pantetheine 4'-phosphoryl)serine modification is found at Ser113. Residues 492-729 (GKTFLVTGAG…AMLLTPDFVA (238 aa)) form a ketoreductase (KR) domain region. The Ketosynthase family 3 (KS3) domain occupies 926 to 1428 (MEVLQEVAVE…QKGGQVVGVA (503 aa)). The For beta-ketoacyl synthase activity role is filled by Cys1113. The span at 1244 to 1270 (SMISVTSRPSSRSSTSSEVSDKSSLTS) shows a compositional bias: low complexity. The disordered stretch occupies residues 1244–1288 (SMISVTSRPSSRSSTSSEVSDKSSLTSITSISNPAPRAQRARSTT). Catalysis depends on for beta-ketoacyl synthase activity residues His1313 and His1354. Residues 1497–1521 (PSTGQYRFRSDATPALDDDALPPPG) form a disordered region. Asp1552 contributes to the Mg(2+) binding site. Residues 1552-1554 (DLV), 1598-1608 (EAVFKCLQTHS), 1622-1625 (HGGN), and 1652-1654 (ISY) contribute to the acetyl-CoA site. Ser1653 lines the Mg(2+) pocket.

Belongs to the thiolase-like superfamily. Fungal fatty acid synthetase subunit alpha family. As to quaternary structure, [Alpha(6)beta(6)] hexamers of two multifunctional subunits (alpha and beta). In terms of processing, 4'-phosphopantetheine is transferred from CoA to a specific serine of the acyl carrier domain by the C-terminal PPT domain. This modification is essential for activity because fatty acids are bound in thioester linkage to the sulfhydryl of the prosthetic group.

The catalysed reaction is acetyl-CoA + n malonyl-CoA + 2n NADPH + 4n H(+) = a long-chain-acyl-CoA + n CoA + n CO2 + 2n NADP(+).. It catalyses the reaction a fatty acyl-[ACP] + malonyl-[ACP] + H(+) = a 3-oxoacyl-[ACP] + holo-[ACP] + CO2. It carries out the reaction a (3R)-hydroxyacyl-[ACP] + NADP(+) = a 3-oxoacyl-[ACP] + NADPH + H(+). It participates in mycotoxin biosynthesis; aflatoxin biosynthesis. Functionally, fatty acid synthase alpha subunit; part of the gene cluster that mediates the biosynthesis of aflatoxins, a group of polyketide-derived furanocoumarins, and part of the most toxic and carcinogenic compounds among the known mycotoxins. The four major aflatoxins produced by A.parasiticus are aflatoxin B1 (AFB1), aflatoxin B2 (AFB2), aflatoxin G1 (AFG1) and aflatoxin G2 (AFG2). Within the aflatoxin pathway, the fungal fatty acid synthase aflA/aflB provides the hexanoyl starter unit to the acyl-carrier protein (ACP) domain of the norsolorinic acid synthase to allow the first step of the pathway. The biosynthesis of aflatoxins begins with the norsolorinic acid synthase aflC that combines a hexanoyl starter unit produced by the fatty acid synthase aflA/aflB and 7 malonyl-CoA extender units to synthesize the precursor NOR. The second step is the conversion of NOR to averantin (AVN) and requires the norsolorinic acid ketoreductase aflD, which catalyzes the dehydration of norsolorinic acid to form (1'S)-averantin. The norsolorinic acid reductases aflE and aflF may also play a role in the conversion of NOR to AVN. The cytochrome P450 monooxygenase aflG then catalyzes the hydroxylation of AVN to 5'hydroxyaverantin (HAVN). The next step is performed by the 5'-hydroxyaverantin dehydrogenase aflH that transforms HAVN to 5'-oxoaverantin (OAVN) which is further converted to averufin (AVF) by aflK that plays a dual role in the pathway, as a 5'-oxoaverantin cyclase that mediates conversion of 5'-oxoaverantin, as well as a versicolorin B synthase in a later step in the pathway. The averufin oxidase aflI catalyzes the conversion of AVF to versiconal hemiacetal acetate (VHA). VHA is then the substrate for the versiconal hemiacetal acetate esterase aflJ to yield versiconal (VAL). Versicolorin B synthase aflK then converts VAL to versicolorin B (VERB) by closing the bisfuran ring of aflatoxin which is required for DNA-binding, thus giving to aflatoxin its activity as a mutagen. Then, the activity of the versicolorin B desaturase aflL leads to versicolorin A (VERA). A branch point starts from VERB since it can also be converted to dihydrodemethylsterigmatocystin (DMDHST), probably also by aflL, VERA being a precursor for aflatoxins B1 and G1, and DMDHST for aflatoxins B2 and G2. Next, the versicolorin reductase aflM and the cytochrome P450 monooxygenase aflN are involved in conversion of VERA to demethylsterigmatocystin (DMST). AflX and aflY seem also involved in this step, through probable aflX-mediated epoxide ring-opening step following versicolorin A oxidation and aflY-mediated Baeyer-Villiger oxidation required for the formation of the xanthone ring. The methyltransferase aflO then leads to the modification of DMST to sterigmatocystin (ST), and of DMDHST to dihydrosterigmatocystin (DHST). Both ST and DHST are then substrates of the O-methyltransferase aflP to yield O-methylsterigmatocystin (OMST) and dihydro-O-methylsterigmatocystin (DHOMST), respectively. Finally OMST is converted to aflatoxins B1 and G1, and DHOMST to aflatoxins B2 and G2, via the action of several enzymes including O-methylsterigmatocystin oxidoreductase aflQ, the cytochrome P450 monooxygenase aflU, but also the NADH-dependent flavin oxidoreductase nadA which is specifically required for the synthesis of AFG1. The sequence is that of Fatty acid synthase alpha subunit aflA from Aspergillus parasiticus (strain ATCC 56775 / NRRL 5862 / SRRC 143 / SU-1).